We begin with the raw amino-acid sequence, 441 residues long: MEQPPGEAAEVREEEEKKEVAEAEGAPELNGGPERSLPSSSYTDLSRSSSPPSLLDQLQMGGDGASCGSLNMECRVCGDKASGFHYGVHACEGCKGFFRRTIRMKLEYEKCERICKIQKKNRNKCQYCRFQKCVALGMSHNAIRFGRMPEAEKRKLVAGLTANEGTQHNPQVADLKAFSKHIYNAYLKNFNMTKKKARGILTGKASHTAPFVIHDIETLWQAEKGLVWKQLVNGLPPYKEISVHVFYRCQCTTVETVRELTEFAKSIPSFSNLFLNDQVTLLKYGVHEAIFAMLASIVNKDGLLVANGTGFVTREFLRSLRKPFSDIIEPKFEFAVKFNALELDDSDLALFIAAIILCGDRPGLINVPQVEAIQDTILRALEFHLQANHPYAQYLFPKLLQKMADLRQLVTEHAQMMQRIKKTETETSLHPLLQEIYKDMY.

The disordered stretch occupies residues 1–58 (MEQPPGEAAEVREEEEKKEVAEAEGAPELNGGPERSLPSSSYTDLSRSSSPPSLLDQL). Residues 9–21 (AEVREEEEKKEVA) show a composition bias toward basic and acidic residues. The segment covering 36 to 55 (SLPSSSYTDLSRSSSPPSLL) has biased composition (low complexity). A DNA-binding region (nuclear receptor) is located at residues 70-145 (LNMECRVCGD…LGMSHNAIRF (76 aa)). NR C4-type zinc fingers lie at residues 74–94 (CRVC…CEGC) and 111–133 (CERI…FQKC). The region spanning 211 to 439 (FVIHDIETLW…HPLLQEIYKD (229 aa)) is the NR LBD domain.

Belongs to the nuclear hormone receptor family. NR1 subfamily. As to quaternary structure, heterodimer with the retinoid X receptor. Interacts (via domain NR LBD) with CRY1 and CRY2 in a ligand-dependent manner. 'Lys-48'-linked polyubiquitinated; leading to proteasomal degradation. Deubiquitinated and stabilized by OTUD3.

It localises to the nucleus. In terms of biological role, ligand-activated transcription factor key mediator of energy metabolism in adipose tissues. Receptor that binds peroxisome proliferators such as hypolipidemic drugs and fatty acids. Has a preference for poly-unsaturated fatty acids, such as gamma-linoleic acid and eicosapentanoic acid. Once activated by a ligand, the receptor binds to promoter elements of target genes. Regulates the peroxisomal beta-oxidation pathway of fatty acids. Functions as a transcription activator for the acyl-CoA oxidase gene. Decreases expression of NPC1L1 once activated by a ligand. The polypeptide is Peroxisome proliferator-activated receptor delta (PPARD) (Canis lupus familiaris (Dog)).